We begin with the raw amino-acid sequence, 223 residues long: Killer cell lectin-like receptor subfamily B member 1B allele B (223 aa).

Topologically, residues 1-45 are cytoplasmic; the sequence is MDTAVVYADLHLARTGEPKHKSPPSLSPDTCQCPRWHRLALKLGC. An ITIM motif motif is present at residues 5–10; it reads VVYADL. The LCK-binding motif signature appears at 31 to 34; sequence CQCP. Residues 46–66 form a helical; Signal-anchor for type II membrane protein membrane-spanning segment; sequence ACLILLVLSVIGLGVLVLTLL. At 67–223 the chain is on the extracellular side; sequence QKPLIQNSPA…LKCECMCNGS (157 aa). Positions 101 to 211 constitute a C-type lectin domain; the sequence is HQDKCFHVSQ…CDSDNLWICQ (111 aa). 2 disulfides stabilise this stretch: Cys122–Cys210 and Cys189–Cys202.

Homodimer; disulfide-linked. Interacts with tyrosine kinase LCK. Binds PTPN6/SHP-1 in a phosphorylation-dependent manner. In terms of tissue distribution, expressed in a subset of natural killer cells.

It is found in the membrane. Its function is as follows. Receptor for CLEC2D/OCIL. Ligand-binding contributes to inhibition of cytotoxic natural killer (NK) cells. May mediate MHC class I-independent 'missing-self' recognition of allografts, tumor cells and virus-infected cells. The chain is Killer cell lectin-like receptor subfamily B member 1B allele B from Rattus norvegicus (Rat).